A 343-amino-acid chain; its full sequence is SET and MYND domain-containing protein DDB_G0292454 (343 aa).

Residues 77 to 307 (EPFISYPSII…PGDEITISYT (231 aa)) enclose the SET domain. Positions 93, 96, 111, 114, 120, 124, 133, and 137 each coordinate Zn(2+). Residues 93–137 (CNHCLKEIKKEEEEIKQECEECKVYKYCSIECKEKSSIEYHSVLC) form an MYND-type zinc finger.

This sequence belongs to the class V-like SAM-binding methyltransferase superfamily.

Probable methyltransferase. In Dictyostelium discoideum (Social amoeba), this protein is SET and MYND domain-containing protein DDB_G0292454.